The chain runs to 531 residues: Zinc finger protein 837 (531 aa).

The tract at residues 1 to 101 (MEAPAQKAGQ…CGPTSSQNPE (101 aa)) is disordered. Basic and acidic residues predominate over residues 24 to 50 (AREKRPEEPRPLEEDRAGSRPTQKGDL). 8 consecutive C2H2-type zinc fingers follow at residues 271–293 (YACD…QRIH), 299–321 (YECA…QKTH), 363–385 (YECA…RRVH), 391–413 (YACP…QRTH), 419–441 (YACP…QRAH), 447–469 (YGCS…ERLH), 475–497 (YICR…LRTH), and 503–525 (YACG…RKRH).

This sequence belongs to the krueppel C2H2-type zinc-finger protein family.

The protein resides in the nucleus. Functionally, may be involved in transcriptional regulation. The protein is Zinc finger protein 837 (ZNF837) of Homo sapiens (Human).